Consider the following 270-residue polypeptide: B3 domain-containing protein Os03g0212300 (270 aa).

2 DNA-binding regions (TF-B3) span residues 13-110 and 158-265; these read FEFF…FDET and VTLR…RKAD.

Its subcellular location is the nucleus. This chain is B3 domain-containing protein Os03g0212300, found in Oryza sativa subsp. japonica (Rice).